Consider the following 27-residue polypeptide: LCLSCRGGDYDCRVKGTCENGKCVCGS.

3 disulfides stabilise this stretch: C2-C23, C5-C18, and C12-C25.

Expressed by the venom gland.

It is found in the secreted. In Centruroides noxius (Mexican scorpion), this protein is Peptide Cn29.